We begin with the raw amino-acid sequence, 148 residues long: Large ribosomal subunit protein bL9 (148 aa).

It belongs to the bacterial ribosomal protein bL9 family.

In terms of biological role, binds to the 23S rRNA. This is Large ribosomal subunit protein bL9 from Syntrophobacter fumaroxidans (strain DSM 10017 / MPOB).